A 987-amino-acid chain; its full sequence is Rho GTPase-activating protein 6 (987 aa).

Over residues 1–21 (MSAQSLLHSVFSCSSPASGGT) the composition is skewed to polar residues. 3 disordered regions span residues 1 to 60 (MSAQ…RGST), 76 to 117 (SRLA…SGSF), and 144 to 170 (GSGSASSRSPASILSSSGGGPNGIFSS). A Phosphoserine modification is found at S37. Over residues 44–57 (GGCGSEMGAEGGLR) the composition is skewed to gly residues. Polar residues predominate over residues 100–115 (SSFSTPSTPQEKSPSG). Residues 144-159 (GSGSASSRSPASILSS) show a composition bias toward low complexity. S265 is modified (phosphoserine). A disordered region spans residues 324-363 (KQNKELSSSNSSLSSTSETPNESTSPNTPEPAPRARRRGA). Low complexity predominate over residues 328 to 350 (ELSSSNSSLSSTSETPNESTSPN). The SH3-binding signature appears at 344-354 (NESTSPNTPEP). At S365 the chain carries Phosphoserine. Positions 403–604 (LSLNPIYRQV…KMIENYEALF (202 aa)) constitute a Rho-GAP domain. Residues 641-676 (DILQTEVSFSMGGRHSSTDSNKASSGDISPYDNNSP) are disordered. Over residues 658–676 (TDSNKASSGDISPYDNNSP) the composition is skewed to polar residues. Phosphoserine is present on residues S669, S675, S682, S713, S758, S776, S781, S790, and S824. The segment at 709–731 (GHLSSPKSKSRESSPGPRLGKEM) is disordered. 2 disordered regions span residues 825-847 (TPHIQDGSRGTRRPAASSDPFLS) and 863-953 (WLQS…QDKQ). Residues 939–948 (LSSAYSLSAS) are compositionally biased toward low complexity. Residues S941 and S944 each carry the phosphoserine modification.

Expressed in retina and lung.

The protein resides in the cytoplasm. In terms of biological role, GTPase activator for the Rho-type GTPases by converting them to an inactive GDP-bound state. Could regulate the interactions of signaling molecules with the actin cytoskeleton. Promotes continuous elongation of cytoplasmic processes during cell motility and simultaneous retraction of the cell body changing the cell morphology. This is Rho GTPase-activating protein 6 (Arhgap6) from Mus musculus (Mouse).